A 312-amino-acid polypeptide reads, in one-letter code: MKSDKPFLERYFYDPTLLQKGLIFALYPFSLIYQCIATIKRKTAKKHDFKIPIISIGNLIAGGSGKTPFILEIAPRYQEVAVVSRGYQRDSKGLVVVSVKGNILVPQKTAGDEAYLLALNLKQASVIVSEKRELGVLKALELGSKIVFLDDGFRFNFNQFNALLKPKVPPYYPFCLPSGLYRENIKSYKEAHLVITEDKDYQRITSITNPTKRMLLVTAIANPSRLDAFLPKEVVKKLYFRDHAPFDLKLLEKEFYQNNATSLLVTSKDLVKLQDCKLPLSVLDLKLEICPKVLEEIDRYILSYPCNIKEHL.

ATP is bound at residue 60–67 (IAGGSGKT).

Belongs to the LpxK family.

It carries out the reaction a lipid A disaccharide + ATP = a lipid IVA + ADP + H(+). It participates in glycolipid biosynthesis; lipid IV(A) biosynthesis; lipid IV(A) from (3R)-3-hydroxytetradecanoyl-[acyl-carrier-protein] and UDP-N-acetyl-alpha-D-glucosamine: step 6/6. Functionally, transfers the gamma-phosphate of ATP to the 4'-position of a tetraacyldisaccharide 1-phosphate intermediate (termed DS-1-P) to form tetraacyldisaccharide 1,4'-bis-phosphate (lipid IVA). This Helicobacter pylori (strain J99 / ATCC 700824) (Campylobacter pylori J99) protein is Tetraacyldisaccharide 4'-kinase.